The chain runs to 498 residues: Protein nucleotidyltransferase YdiU (498 aa).

Gly-88, Gly-90, Arg-91, Lys-111, Asp-123, Gly-124, Arg-174, and Arg-181 together coordinate ATP. Asp-250 serves as the catalytic Proton acceptor. Positions 251 and 260 each coordinate Mg(2+). Asp-260 lines the ATP pocket.

Belongs to the SELO family. It depends on Mg(2+) as a cofactor. The cofactor is Mn(2+).

The catalysed reaction is L-seryl-[protein] + ATP = 3-O-(5'-adenylyl)-L-seryl-[protein] + diphosphate. The enzyme catalyses L-threonyl-[protein] + ATP = 3-O-(5'-adenylyl)-L-threonyl-[protein] + diphosphate. It carries out the reaction L-tyrosyl-[protein] + ATP = O-(5'-adenylyl)-L-tyrosyl-[protein] + diphosphate. It catalyses the reaction L-histidyl-[protein] + UTP = N(tele)-(5'-uridylyl)-L-histidyl-[protein] + diphosphate. The catalysed reaction is L-seryl-[protein] + UTP = O-(5'-uridylyl)-L-seryl-[protein] + diphosphate. The enzyme catalyses L-tyrosyl-[protein] + UTP = O-(5'-uridylyl)-L-tyrosyl-[protein] + diphosphate. In terms of biological role, nucleotidyltransferase involved in the post-translational modification of proteins. It can catalyze the addition of adenosine monophosphate (AMP) or uridine monophosphate (UMP) to a protein, resulting in modifications known as AMPylation and UMPylation. The chain is Protein nucleotidyltransferase YdiU from Methylorubrum populi (strain ATCC BAA-705 / NCIMB 13946 / BJ001) (Methylobacterium populi).